The primary structure comprises 295 residues: Cell shape-determining protein MreC (295 aa).

An N-terminal signal peptide occupies residues 1–34 (MPQFFLNKRLIILLISIIVLVALVGFSLRDRENA). A coiled-coil region spans residues 66-112 (VVDLKNTYTENQHLKERLEELAQLESEVADLKKENKDLKESLDITDS). Residues 276–295 (SAEAGTTDDDTTSSDTTGGQ) are disordered.

This sequence belongs to the MreC family. In terms of assembly, homooligomer of 24 subunits, arranged as 12 dimers.

In terms of biological role, involved in formation and maintenance of cell shape. The chain is Cell shape-determining protein MreC from Listeria monocytogenes serovar 1/2a (strain ATCC BAA-679 / EGD-e).